Consider the following 310-residue polypeptide: ER-derived vesicles protein ERV29 (310 aa).

The Cytoplasmic portion of the chain corresponds to methionine 1–tyrosine 108. The tract at residues glycine 11–asparagine 31 is disordered. Residues phenylalanine 109 to leucine 129 traverse the membrane as a helical segment. Over valine 130–tyrosine 137 the chain is Lumenal. A helical membrane pass occupies residues alanine 138 to glycine 158. Topologically, residues serine 159–arginine 209 are cytoplasmic. Residues isoleucine 210–leucine 230 form a helical membrane-spanning segment. At threonine 231 to lysine 245 the chain is on the lumenal side. Residues phenylalanine 246–tryptophan 266 traverse the membrane as a helical segment. Topologically, residues phenylalanine 267–tyrosine 310 are cytoplasmic. The Di-lysine motif signature appears at lysine 307–tyrosine 310.

The protein belongs to the SURF4 family.

It localises to the endoplasmic reticulum membrane. Its function is as follows. Constituent of COPII-coated endoplasmic reticulum-derived transport vesicles. Required for efficient transport of a subset of secretory proteins to the Golgi. The C-terminal di-lysine motif is required for exit from the endoplasmic reticulum. Required directly for packaging glycosylated pro-alpha-factor into COPII vesicles. Facilitates retrograde transport from the Golgi to the endoplasmic reticulum. The polypeptide is ER-derived vesicles protein ERV29 (ERV29) (Saccharomyces cerevisiae (strain ATCC 204508 / S288c) (Baker's yeast)).